We begin with the raw amino-acid sequence, 125 residues long: Small ribosomal subunit protein uS12 (125 aa).

D89 carries the 3-methylthioaspartic acid modification. The segment at 106–125 (GVKDRKQSRSKYGAKRPKKA) is disordered. The span at 113–125 (SRSKYGAKRPKKA) shows a compositional bias: basic residues.

It belongs to the universal ribosomal protein uS12 family. Part of the 30S ribosomal subunit. Contacts proteins S8 and S17. May interact with IF1 in the 30S initiation complex.

With S4 and S5 plays an important role in translational accuracy. In terms of biological role, interacts with and stabilizes bases of the 16S rRNA that are involved in tRNA selection in the A site and with the mRNA backbone. Located at the interface of the 30S and 50S subunits, it traverses the body of the 30S subunit contacting proteins on the other side and probably holding the rRNA structure together. The combined cluster of proteins S8, S12 and S17 appears to hold together the shoulder and platform of the 30S subunit. This is Small ribosomal subunit protein uS12 from Azoarcus sp. (strain BH72).